The following is a 286-amino-acid chain: Tungstate-binding protein TupA (286 aa).

The first 20 residues, 1–20, serve as a signal peptide directing secretion; the sequence is MKRLLSIITAVMMLALALTG. The N-palmitoyl cysteine moiety is linked to residue Cys-21. A lipid anchor (S-diacylglycerol cysteine) is attached at Cys-21.

Monomer. The complex is composed of two ATP-binding proteins (TupC), two transmembrane proteins (TupB) and a solute-binding protein (TupA).

The protein resides in the cell membrane. Functionally, part of an ABC transporter complex involved in tungstate uptake. Specifically binds tungstate. This chain is Tungstate-binding protein TupA, found in Peptoclostridium acidaminophilum (Eubacterium acidaminophilum).